The primary structure comprises 367 residues: RNA-binding protein 48 (367 aa).

One can recognise an RRM domain in the interval 46-124 (QYLLIQGVPA…GLLHVCYAPE (79 aa)). 3 disordered regions span residues 217 to 243 (PVDRAPDSSKDGRNHHKTMGHYNHNDS), 280 to 302 (QLQERKRRREDDRKLGTFLQTNP), and 343 to 367 (SVPKPPEDKPEDVHTSHPLKQRRRI). Residues 347–357 (PPEDKPEDVHT) are compositionally biased toward basic and acidic residues.

The protein belongs to the RBM48 family. In terms of assembly, component of the minor spliceosome. Within this complex, interacts with ARMC7 and PRPF8/PRP8.

In terms of biological role, as a component of the minor spliceosome, involved in the splicing of U12-type introns in pre-mRNAs. This is RNA-binding protein 48 (RBM48) from Homo sapiens (Human).